The following is a 591-amino-acid chain: Metalloendopeptidase OPG085 (591 aa).

H41 is a binding site for Zn(2+). The active site involves E44. The Zn(2+) site is built by H45 and E112.

Belongs to the peptidase M44 family. Requires Zn(2+) as cofactor. Undergoes proteolytic processing during the course of infection. May be cleaved into 46 kDa and 22 kDa products (Potential).

It is found in the virion. Its function is as follows. Probably involved in maturation of some viral proteins by processing them preferentially at Ala-Gly-|-Ser/Thr/Lys motifs. Does not seem to be responsible for the cleavage of major core proteins. The protein is Metalloendopeptidase OPG085 (OPG085) of Variola virus (isolate Human/India/Ind3/1967) (VARV).